Reading from the N-terminus, the 58-residue chain is Large ribosomal subunit protein uL30 (58 aa).

Belongs to the universal ribosomal protein uL30 family. In terms of assembly, part of the 50S ribosomal subunit.

The sequence is that of Large ribosomal subunit protein uL30 from Pelobacter propionicus (strain DSM 2379 / NBRC 103807 / OttBd1).